A 478-amino-acid polypeptide reads, in one-letter code: Sialidase-4 (478 aa).

Residues 22–25 (YRVP) carry the FRIP motif motif. 2 residues coordinate substrate: R23 and R43. Active-site proton acceptor residues include D47 and D48. The stretch at 127-138 (VTSCDAGLTWGS) is one BNR 1 repeat. The substrate site is built by Y177 and Y179. The BNR 2 repeat unit spans residues 200–211 (FYSDDHGISWHC). Substrate contacts are provided by E222 and R238. A BNR 3 repeat occupies 247–258 (ALSADEGTSFLP). Disordered stretches follow at residues 285-307 (IEPQDDRWTGSPRNTPHSPCFNL) and 335-359 (SRSPENHGLEPGSDGDKTSWTPECP). A substrate-binding site is contributed by R383. The active-site Nucleophile is the Y413. E434 is a catalytic residue.

This sequence belongs to the glycosyl hydrolase 33 family. In terms of tissue distribution, highly expressed in brain, particularly in hippocampus, and at lower levels in liver and spleen. Expressed in hippocampal neurons (at protein level).

It localises to the cell membrane. The protein localises to the endoplasmic reticulum membrane. It is found in the microsome membrane. The protein resides in the mitochondrion inner membrane. Its subcellular location is the mitochondrion outer membrane. It localises to the cell projection. The protein localises to the neuron projection. It is found in the lysosome lumen. The catalysed reaction is Hydrolysis of alpha-(2-&gt;3)-, alpha-(2-&gt;6)-, alpha-(2-&gt;8)- glycosidic linkages of terminal sialic acid residues in oligosaccharides, glycoproteins, glycolipids, colominic acid and synthetic substrates.. It carries out the reaction a ganglioside GM3 + H2O = a beta-D-galactosyl-(1-&gt;4)-beta-D-glucosyl-(1&lt;-&gt;1)-ceramide + N-acetylneuraminate. It catalyses the reaction a ganglioside GM3 (d18:1(4E)) + H2O = a beta-D-Gal-(1-&gt;4)-beta-D-Glc-(1&lt;-&gt;1)-Cer(d18:1(4E)) + N-acetylneuraminate. The enzyme catalyses a ganglioside GM2 + H2O = a ganglioside GA2 + N-acetylneuraminate. The catalysed reaction is a ganglioside GM2 (d18:1(4E)) + H2O = a ganglioside GA2 (d18:1(4E)) + N-acetylneuraminate. It carries out the reaction a ganglioside GD1a + H2O = a ganglioside GM1 + N-acetylneuraminate. It catalyses the reaction a ganglioside GD1a (d18:1(4E)) + H2O = a ganglioside GM1 (d18:1(4E)) + N-acetylneuraminate. The enzyme catalyses a ganglioside GD3 + H2O = a ganglioside GM3 + N-acetylneuraminate. The catalysed reaction is a ganglioside GD3 (d18:1(4E)) + H2O = a ganglioside GM3 (d18:1(4E)) + N-acetylneuraminate. Functionally, exo-alpha-sialidase that catalyzes the hydrolytic cleavage of the terminal sialic acid (N-acetylneuraminic acid, Neu5Ac) of a glycan moiety in the catabolism of glycolipids, glycoproteins and oligosacharides. Efficiently hydrolyzes gangliosides including alpha-(2-&gt;3)-sialylated GD1a and GM3 and alpha-(2-&gt;8)-sialylated GD3. Hydrolyzes poly-alpha-(2-&gt;8)-sialylated neural cell adhesion molecule NCAM1 likely at growth cones, suppressing neurite outgrowth in hippocampal neurons. May desialylate sialyl Lewis A and X antigens at the cell surface, down-regulating these glycan epitopes recognized by SELE/E selectin in the initiation of cell adhesion and extravasation. Has sialidase activity toward mucin, fetuin and sialyllactose. This is Sialidase-4 (Neu4) from Mus musculus (Mouse).